Reading from the N-terminus, the 3704-residue chain is Fatty acid synthase 2 (3704 aa).

Residues 27 to 41 (AVSAHGSPPSSASPG) are compositionally biased toward low complexity. A disordered region spans residues 27–52 (AVSAHGSPPSSASPGPDDKAFSVDGT). An acetyltransferase (AT) domain region spans residues 216–475 (ALFGGQGNNH…QARIPFSKRK (260 aa)). The interval 639–887 (SRLLGKPPIM…LIASTQGCSD (249 aa)) is enoyl reductase (ER) domain. The dehydratase (DH) domain stretch occupies residues 1216–1709 (GEQPSWIRAL…VPGDQLSVQL (494 aa)). The region spanning 1624 to 1730 (PKTNEPYSRA…VQIDASNQRG (107 aa)) is the MaoC-like domain. The interval 1747-2112 (YVFTGQGSQA…IEHVSEVTRS (366 aa)) is malonyl/palmitoyl transferase (MT/PT) domain. One can recognise a Carrier domain in the interval 2265–2343 (DERLDPLLTV…AALRPGYSGE (79 aa)). Residue Ser-2303 is modified to O-(pantetheine 4'-phosphoryl)serine. A ketoreductase (KR) domain region spans residues 2733-2969 (GLDVLLTGVG…LGLVEPEFAS (237 aa)). The region spanning 3176–3623 (QQEIELTHDL…QVGGIAMILH (448 aa)) is the Ketosynthase family 3 (KS3) domain. Residues Cys-3359, His-3506, and His-3547 each act as for beta-ketoacyl synthase activity in the active site.

This sequence in the N-terminal section; belongs to the fungal fatty acid synthetase subunit beta family. The protein in the C-terminal section; belongs to the thiolase-like superfamily. Fungal fatty acid synthetase subunit alpha family.

It functions in the pathway secondary metabolite biosynthesis. Its function is as follows. Fatty acid synthase; part of the gene cluster that mediates the biosynthesis of the glycolipid biosurfactant ustilagic acid (UA). UA is a secreted cellobiose glycolipid that is toxic for many microorganisms and confers biocontrol activity to U.maydis. UA consists of 15,16-dihydroxypalmitic or 2,15,16-trihydroxypalmitic acid, which is O-glycosidically linked to cellobiose at its terminal hydroxyl group. In addition, the cellobiose moiety is acetylated and acylated with a short-chain hydroxy fatty acid. UA biosynthesis starts with omega-hydroxylation of palmitic acid catalyzed by the cytochrome P450 monooxygenase cyp1. Terminal hydroxylation of palmitic acid precedes subterminal hydroxylation catalyzed by the cytochrome P450 monooxygenase cyp2. Sequential glucosylation of the hydroxy fatty acid is probably catalyzed by the glycosyltransferase ugt1. The cellobiose lipid is further decorated by acetylation of the proximal glucose residue and by acylation with a short-chain beta-hydroxy fatty acid at the distal glucose residue. The acyltransferase uat1 may be a good candidate for catalyzing either acetylation or acylation of the cellobiose lipid. The fatty acid synthase fas2 may be involved in synthesis of the carbon backbone of the short-chain beta-hydroxy fatty acid esterified to the cellobiose disaccharide. The secreted UA consists of a mixture of both alpha-hydroxylated and non-hydroxylated glycolipids; therefore, alpha-hydroxylation of the long-chain fatty, catalyzed by the fatty acid hydroxylase ahd1, occurs late in UA biosynthesis and may be the last step before secretion. This is Fatty acid synthase 2 from Mycosarcoma maydis (Corn smut fungus).